Consider the following 160-residue polypeptide: MGVFTYETEFTSVIPPPRLYKAFVLDADNLIPKIAPQAVKSAEIVQGDGGVGTIKKIHLGEGSEYSYVKHQIDGLDKDNFVYNYSIIEGDAIGDKVEKISYEIKLVASPSGGSIIKSTSHYHCKGEVEIKEEHVKAGKEKAAGLFKIIENHLLANPEAYN.

Belongs to the BetVI family. Post-translationally, phosphorylated in vivo. Phosphorylation prevents its activity as ribonuclease. Highly expressed in roots. Expressed a low levels in ripe red fruits.

Functionally, possesses ribonuclease activity in vitro. The sequence is that of Major strawberry allergen Fra a 1.08 from Fragaria ananassa (Strawberry).